Reading from the N-terminus, the 348-residue chain is Large ribosomal subunit protein uL3m (348 aa).

The transit peptide at 1-40 directs the protein to the mitochondrion; sequence MPGWRLLTQVGAQVLGRLGDGLGAALGPGNRTHIWLFVRG.

Belongs to the universal ribosomal protein uL3 family. In terms of assembly, component of the mitochondrial large ribosomal subunit (mt-LSU). Mature mammalian 55S mitochondrial ribosomes consist of a small (28S) and a large (39S) subunit. The 28S small subunit contains a 12S ribosomal RNA (12S mt-rRNA) and 30 different proteins. The 39S large subunit contains a 16S rRNA (16S mt-rRNA), a copy of mitochondrial valine transfer RNA (mt-tRNA(Val)), which plays an integral structural role, and 52 different proteins.

It localises to the mitochondrion. In Homo sapiens (Human), this protein is Large ribosomal subunit protein uL3m (MRPL3).